A 428-amino-acid polypeptide reads, in one-letter code: MTIVKDLIFRISSLKFAISLIIFIAISSGVGTFIPQGSNSKFYIENFDEAPIFGFLNGEKVLILQLDHIYTSLWFLFALILLCISLAACSFRRQIPSLKASLKWIEYKSEKKFRKLQLNSSYQINEVEDLISKADLFLKKRGWKTYKFKSHISARKGLIGKIGPLVVHIGLIVLLIGSAYGSFTSQSKEQYLLPGESLDLINESTNSKANIKLVDFSIERESDGIPKQFISKLDFTSEDSKFNEVKTAKVNHPIRFKGLTIYQADWAISNIVLEIDNILYQLQLKEIPEIGNQVWGILIELGSETKKNFLLTIDNENGPLKISNTENFSGNNLYINENPLEVNSSKVSLKKIIPSSGLIIKNDPSIPFIYFSFILIIFGTIISLIPTNQLWILVNQESQSLSIGGLSNKNLVGFKKEFFKLSEEIKNF.

A run of 3 helical transmembrane segments spans residues Leu-14–Ile-34, Ser-72–Arg-92, and Ile-162–Ser-182.

Belongs to the Ccs1/CcsB family. May interact with CcsA.

The protein resides in the cellular thylakoid membrane. In terms of biological role, required during biogenesis of c-type cytochromes (cytochrome c6 and cytochrome f) at the step of heme attachment. In Prochlorococcus marinus (strain MIT 9301), this protein is Cytochrome c biogenesis protein CcsB.